The following is a 520-amino-acid chain: Developmental regulatory protein wetA (520 aa).

3 stretches are compositionally biased toward polar residues: residues 109–118 (TATHALSISP), 155–165 (QSFSPSLMRSS), and 378–392 (SSQKFDTSYTSSQVH). 3 disordered regions span residues 109–165 (TATH…MRSS), 378–454 (SSQK…SNKS), and 468–496 (KKILTGVAPSGSSKTKARREQEARDRRRK). A compositionally biased stretch (basic residues) spans 420-429 (PTHRRTHSRK). Residues 445-454 (SSSSRGSNKS) are compositionally biased toward low complexity.

It belongs to the wetA family.

BrlA, abaA and wetA are pivotal regulators of conidiophore development and conidium maturation. They act individually and together to regulate their own expression and that of numerous other sporulation-specific genes. This chain is Developmental regulatory protein wetA, found in Penicillium roqueforti (strain FM164).